The following is a 763-amino-acid chain: Phosphoglycerol transferase I (763 aa).

4 helical membrane passes run 4–19 (LLSFALFLASVLIYAW), 26–48 (WWFAATLTVLGLFVVLNITLFAS), 76–98 (YILPGIGIVLGLAAVFGALGWIL), and 105–127 (PHHFGYSLLALLLALGSVDASPA).

It belongs to the OpgB family.

The protein resides in the cell inner membrane. It catalyses the reaction a phosphatidylglycerol + a membrane-derived-oligosaccharide D-glucose = a 1,2-diacyl-sn-glycerol + a membrane-derived-oligosaccharide 6-(glycerophospho)-D-glucose.. Its pathway is glycan metabolism; osmoregulated periplasmic glucan (OPG) biosynthesis. Transfers a phosphoglycerol residue from phosphatidylglycerol to the membrane-bound nascent glucan backbones. The sequence is that of Phosphoglycerol transferase I from Escherichia coli O6:H1 (strain CFT073 / ATCC 700928 / UPEC).